A 654-amino-acid polypeptide reads, in one-letter code: NADPH-dependent diflavin oxidoreductase 1 (654 aa).

The region spanning 14–166 (ALVLYGSETG…TFIPWITDFR (153 aa)) is the Flavodoxin-like domain. FMN is bound by residues 20 to 25 (SETGNA), 75 to 78 (STTG), and 113 to 122 (LGDSSYPKFN). Residues 235-485 (PDALTATLVE…QLQRGGLSSS (251 aa)) enclose the FAD-binding FR-type domain. Residues Arg389, 419-422 (RQFS), and 458-461 (GVCT) each bind FAD. Residues Thr500, 568-569 (SR), and 574-578 (KIYVQ) each bind NADP(+). Residue Trp654 coordinates FAD.

This sequence belongs to the NADPH-dependent diflavin oxidoreductase NDOR1 family. It in the N-terminal section; belongs to the flavodoxin family. The protein in the C-terminal section; belongs to the flavoprotein pyridine nucleotide cytochrome reductase family. As to quaternary structure, interacts with dre2; as part of the cytosolic iron-sulfur (Fe-S) protein assembly (CIA) machinery. FAD is required as a cofactor. It depends on FMN as a cofactor.

Its subcellular location is the cytoplasm. It is found in the mitochondrion. The catalysed reaction is 2 oxidized [2Fe-2S]-[protein] + NADPH = 2 reduced [2Fe-2S]-[protein] + NADP(+) + H(+). Functionally, NADPH-dependent reductase which is a central component of the cytosolic iron-sulfur (Fe-S) protein assembly (CIA) machinery. Transfers electrons from NADPH via its FAD and FMN prosthetic groups to the [2Fe-2S] cluster of dre2, another key component of the CIA machinery. In turn, this reduced cluster provides electrons for assembly of cytosolic iron-sulfur cluster proteins. Positively controls H(2)O(2)-induced cell death. The sequence is that of NADPH-dependent diflavin oxidoreductase 1 from Aspergillus fumigatus (strain ATCC MYA-4609 / CBS 101355 / FGSC A1100 / Af293) (Neosartorya fumigata).